A 100-amino-acid chain; its full sequence is U-myrmeciitoxin(01)-Mg7b (100 aa).

Residues 1-17 (MKLSCLSLALAIILVLA) form the signal peptide. A propeptide spanning residues 18 to 50 (IVYSPHMEVKALADAEPDAIGFADAFGEADAEP) is cleaved from the precursor. Ser-85 carries O-linked (GalNAc...) serine glycosylation. Residues Thr-94 and Thr-95 are each glycosylated (O-linked (GalNAc...) threonine).

The protein belongs to the formicidae venom precursor-01 superfamily. In terms of processing, glycosylation is critical to maintaining the aqueous solubility of this protein, but does not directly contribute to its activity. In terms of tissue distribution, expressed by the venom gland.

The protein resides in the secreted. It localises to the target cell membrane. Its function is as follows. Neurotoxin that triggers pain behavior and inflammation in mammals, and is paralytic and lethal to insects. Causes a time-dependent increase in cell leak current. May act by targeting membranes. This chain is U-myrmeciitoxin(01)-Mg7b, found in Myrmecia gulosa (Red bulldog ant).